A 397-amino-acid polypeptide reads, in one-letter code: Tyrosine aminotransferase (397 aa).

Positions 34, 66, 131, and 184 each coordinate substrate. Residue Lys247 is modified to N6-(pyridoxal phosphate)lysine. Arg375 serves as a coordination point for substrate.

The protein belongs to the class-I pyridoxal-phosphate-dependent aminotransferase family. In terms of assembly, homodimer. Pyridoxal 5'-phosphate serves as cofactor.

The enzyme catalyses L-tyrosine + 2-oxoglutarate = 3-(4-hydroxyphenyl)pyruvate + L-glutamate. It catalyses the reaction 4-methylsulfanyl-2-oxobutanoate + L-tyrosine = 3-(4-hydroxyphenyl)pyruvate + L-methionine. The catalysed reaction is an aromatic L-alpha-amino acid + 2-oxoglutarate = an aromatic oxo-acid + L-glutamate. It carries out the reaction L-aspartate + 2-oxoglutarate = oxaloacetate + L-glutamate. Its pathway is amino-acid biosynthesis; L-methionine biosynthesis via salvage pathway; L-methionine from S-methyl-5-thio-alpha-D-ribose 1-phosphate: step 6/6. With respect to regulation, inhibited by malate and nitrotyrosine by approximately 20% at the higher concentration. At 100 uM, canaline and carboxymethoxylamine inhibit aminotransferase activity by 35 and 70%, respectively. Addition of 1.0 mM carboxymethoxylamine lead to a complete inhibition of the aminotransferase activity. Catalyzes the formation of methionine from 2-keto-4-methylthiobutyrate (KMTB) primarily using aromatic amino acids (tyrosine, phenylalanine and tryptophan) or glutamate as the amino donors. Histidine, leucine, asparagine, or arginine are also functional amino donors but to a lesser extent. Can also use alpha-ketoglutarate, oxaloacetate and pyruvate as the amino acceptors. The sequence is that of Tyrosine aminotransferase (tyrB) from Klebsiella pneumoniae.